The primary structure comprises 443 residues: L-seryl-tRNA(Sec) selenium transferase (443 aa).

K285 carries the post-translational modification N6-(pyridoxal phosphate)lysine.

This sequence belongs to the SelA family. The cofactor is pyridoxal 5'-phosphate.

Its subcellular location is the cytoplasm. The catalysed reaction is L-seryl-tRNA(Sec) + selenophosphate + H(+) = L-selenocysteinyl-tRNA(Sec) + phosphate. It functions in the pathway aminoacyl-tRNA biosynthesis; selenocysteinyl-tRNA(Sec) biosynthesis; selenocysteinyl-tRNA(Sec) from L-seryl-tRNA(Sec) (bacterial route): step 1/1. Its function is as follows. Converts seryl-tRNA(Sec) to selenocysteinyl-tRNA(Sec) required for selenoprotein biosynthesis. In Campylobacter lari (strain RM2100 / D67 / ATCC BAA-1060), this protein is L-seryl-tRNA(Sec) selenium transferase.